The chain runs to 206 residues: Small ribosomal subunit protein uS4 (206 aa).

Residues 98–155 (TRLDNVVYRLGWALSRDQARQLVSHGKIAVNGKRVNIPSYNLKPGDVVELLDKDLIPV) form the S4 RNA-binding domain.

Belongs to the universal ribosomal protein uS4 family. As to quaternary structure, part of the 30S ribosomal subunit. Contacts protein S5. The interaction surface between S4 and S5 is involved in control of translational fidelity.

In terms of biological role, one of the primary rRNA binding proteins, it binds directly to 16S rRNA where it nucleates assembly of the body of the 30S subunit. Its function is as follows. With S5 and S12 plays an important role in translational accuracy. The chain is Small ribosomal subunit protein uS4 from Dictyoglomus thermophilum (strain ATCC 35947 / DSM 3960 / H-6-12).